The chain runs to 194 residues: MTIKLIAGLGNPGPEYSKTRHNAGVWFVEELARSHNISLRPEKKYSGLYGKGLIAGNLVHLLIPTTFMNRSGQAVAPLANFYKISVDEILVAHDELDMLPGVCKIKKGGGHGGHNGLRDIIDRMANNKDFYRLRIGIDHPGHRDKVTGHVLGKAPSAEQAKIEQAIDEASRCLDIWLKDDLKKAQNRLHSFKAE.

Residue Tyr16 coordinates tRNA. His21 (proton acceptor) is an active-site residue. Residues Phe67, Asn69, and Asn115 each contribute to the tRNA site.

This sequence belongs to the PTH family. Monomer.

Its subcellular location is the cytoplasm. It carries out the reaction an N-acyl-L-alpha-aminoacyl-tRNA + H2O = an N-acyl-L-amino acid + a tRNA + H(+). Hydrolyzes ribosome-free peptidyl-tRNAs (with 1 or more amino acids incorporated), which drop off the ribosome during protein synthesis, or as a result of ribosome stalling. Its function is as follows. Catalyzes the release of premature peptidyl moieties from peptidyl-tRNA molecules trapped in stalled 50S ribosomal subunits, and thus maintains levels of free tRNAs and 50S ribosomes. This chain is Peptidyl-tRNA hydrolase, found in Colwellia psychrerythraea (strain 34H / ATCC BAA-681) (Vibrio psychroerythus).